Consider the following 362-residue polypeptide: Fructose-bisphosphate aldolase (362 aa).

Residue Ser63 participates in D-glyceraldehyde 3-phosphate binding. The active-site Proton donor is Asp112. 4 residues coordinate Zn(2+): His113, Asp147, Glu177, and His229. Residue Gly230 coordinates dihydroxyacetone phosphate. His268 contacts Zn(2+). Residues Gly269 to Ser271 and Asn290 to Thr293 contribute to the dihydroxyacetone phosphate site.

This sequence belongs to the class II fructose-bisphosphate aldolase family. Homodimer. Requires Zn(2+) as cofactor.

The catalysed reaction is beta-D-fructose 1,6-bisphosphate = D-glyceraldehyde 3-phosphate + dihydroxyacetone phosphate. Its pathway is carbohydrate degradation; glycolysis; D-glyceraldehyde 3-phosphate and glycerone phosphate from D-glucose: step 4/4. Its function is as follows. Catalyzes the aldol condensation of dihydroxyacetone phosphate (DHAP or glycerone-phosphate) with glyceraldehyde 3-phosphate (G3P) to form fructose 1,6-bisphosphate (FBP) in gluconeogenesis and the reverse reaction in glycolysis. The chain is Fructose-bisphosphate aldolase (fba) from Neurospora crassa (strain ATCC 24698 / 74-OR23-1A / CBS 708.71 / DSM 1257 / FGSC 987).